A 479-amino-acid polypeptide reads, in one-letter code: Glycogen synthase (479 aa).

An ADP-alpha-D-glucose-binding site is contributed by lysine 15.

Belongs to the glycosyltransferase 1 family. Bacterial/plant glycogen synthase subfamily.

The enzyme catalyses [(1-&gt;4)-alpha-D-glucosyl](n) + ADP-alpha-D-glucose = [(1-&gt;4)-alpha-D-glucosyl](n+1) + ADP + H(+). It participates in glycan biosynthesis; glycogen biosynthesis. Synthesizes alpha-1,4-glucan chains using ADP-glucose. This Clostridium beijerinckii (strain ATCC 51743 / NCIMB 8052) (Clostridium acetobutylicum) protein is Glycogen synthase.